We begin with the raw amino-acid sequence, 119 residues long: UPF0102 protein FN1370 (119 aa).

Belongs to the UPF0102 family.

The protein is UPF0102 protein FN1370 of Fusobacterium nucleatum subsp. nucleatum (strain ATCC 25586 / DSM 15643 / BCRC 10681 / CIP 101130 / JCM 8532 / KCTC 2640 / LMG 13131 / VPI 4355).